The chain runs to 237 residues: 5'-methylthioadenosine/S-adenosylhomocysteine nucleosidase (237 aa).

The active-site Proton acceptor is glutamate 12. Substrate is bound by residues alanine 78, isoleucine 152, and 173–174 (ME). Catalysis depends on aspartate 197, which acts as the Proton donor.

The protein belongs to the PNP/UDP phosphorylase family. MtnN subfamily. Homodimer.

The enzyme catalyses S-adenosyl-L-homocysteine + H2O = S-(5-deoxy-D-ribos-5-yl)-L-homocysteine + adenine. It catalyses the reaction S-methyl-5'-thioadenosine + H2O = 5-(methylsulfanyl)-D-ribose + adenine. The catalysed reaction is 5'-deoxyadenosine + H2O = 5-deoxy-D-ribose + adenine. It participates in amino-acid biosynthesis; L-methionine biosynthesis via salvage pathway; S-methyl-5-thio-alpha-D-ribose 1-phosphate from S-methyl-5'-thioadenosine (hydrolase route): step 1/2. In terms of biological role, catalyzes the irreversible cleavage of the glycosidic bond in both 5'-methylthioadenosine (MTA) and S-adenosylhomocysteine (SAH/AdoHcy) to adenine and the corresponding thioribose, 5'-methylthioribose and S-ribosylhomocysteine, respectively. Also cleaves 5'-deoxyadenosine, a toxic by-product of radical S-adenosylmethionine (SAM) enzymes, into 5-deoxyribose and adenine. Thus, is required for in vivo function of the radical SAM enzymes biotin synthase and lipoic acid synthase, that are inhibited by 5'-deoxyadenosine accumulation. The sequence is that of 5'-methylthioadenosine/S-adenosylhomocysteine nucleosidase from Hamiltonella defensa subsp. Acyrthosiphon pisum (strain 5AT).